We begin with the raw amino-acid sequence, 309 residues long: Methionyl-tRNA formyltransferase (309 aa).

107–110 (SLLP) contributes to the (6S)-5,6,7,8-tetrahydrofolate binding site.

This sequence belongs to the Fmt family.

It catalyses the reaction L-methionyl-tRNA(fMet) + (6R)-10-formyltetrahydrofolate = N-formyl-L-methionyl-tRNA(fMet) + (6S)-5,6,7,8-tetrahydrofolate + H(+). Its function is as follows. Attaches a formyl group to the free amino group of methionyl-tRNA(fMet). The formyl group appears to play a dual role in the initiator identity of N-formylmethionyl-tRNA by promoting its recognition by IF2 and preventing the misappropriation of this tRNA by the elongation apparatus. The polypeptide is Methionyl-tRNA formyltransferase (Borrelia duttonii (strain Ly)).